The following is a 423-amino-acid chain: Kynureninase (423 aa).

Residues Leu105, Ser106, 133-136 (FPSD), Asp218, His221, and Tyr243 each bind pyridoxal 5'-phosphate. Lys244 bears the N6-(pyridoxal phosphate)lysine mark. 2 residues coordinate pyridoxal 5'-phosphate: Trp273 and Asn301.

It belongs to the kynureninase family. In terms of assembly, homodimer. Pyridoxal 5'-phosphate serves as cofactor.

It carries out the reaction L-kynurenine + H2O = anthranilate + L-alanine + H(+). The enzyme catalyses 3-hydroxy-L-kynurenine + H2O = 3-hydroxyanthranilate + L-alanine + H(+). Its pathway is amino-acid degradation; L-kynurenine degradation; L-alanine and anthranilate from L-kynurenine: step 1/1. It participates in cofactor biosynthesis; NAD(+) biosynthesis; quinolinate from L-kynurenine: step 2/3. Catalyzes the cleavage of L-kynurenine (L-Kyn) and L-3-hydroxykynurenine (L-3OHKyn) into anthranilic acid (AA) and 3-hydroxyanthranilic acid (3-OHAA), respectively. The protein is Kynureninase of Xanthomonas oryzae pv. oryzae (strain MAFF 311018).